We begin with the raw amino-acid sequence, 423 residues long: Tyrosine--tRNA ligase (423 aa).

Position 35 (Tyr-35) interacts with L-tyrosine. The 'HIGH' region motif lies at 40–49; that stretch reads PTAPSLHAGH. L-tyrosine contacts are provided by Tyr-170 and Gln-174. Residues 230-234 carry the 'KMSKS' region motif; that stretch reads KFGKS. ATP is bound at residue Lys-233. In terms of domain architecture, S4 RNA-binding spans 355 to 412; the sequence is DLITDLLVATGLSASKGAARRTIAEGGVSVNNMKIDSDEWTPQASDFLHGRWLVLRRG.

This sequence belongs to the class-I aminoacyl-tRNA synthetase family. TyrS type 1 subfamily. Homodimer.

The protein resides in the cytoplasm. The catalysed reaction is tRNA(Tyr) + L-tyrosine + ATP = L-tyrosyl-tRNA(Tyr) + AMP + diphosphate + H(+). Catalyzes the attachment of tyrosine to tRNA(Tyr) in a two-step reaction: tyrosine is first activated by ATP to form Tyr-AMP and then transferred to the acceptor end of tRNA(Tyr). This Mycobacterium sp. (strain KMS) protein is Tyrosine--tRNA ligase.